Here is a 150-residue protein sequence, read N- to C-terminus: Thyroid hormone-inducible hepatic protein (150 aa).

The segment at 83 to 105 (KVAGNEGSEAENEAAETEEAEED) is disordered. At Ser-90 the chain carries Phosphoserine. Acidic residues predominate over residues 90–105 (SEAENEAAETEEAEED).

The protein belongs to the SPOT14 family. Homodimer. Heterodimer with MID1IP1. Interacts with THRB and PLAGL1. In terms of tissue distribution, highly expressed in liver, lactating mammary gland, epididymal, retroperitoneal and brown fat. Mainly expressed in tissues that synthesize triglycerides.

The protein localises to the nucleus. Its subcellular location is the cytoplasm. In terms of biological role, plays a role in the regulation of lipogenesis, especially in lactating mammary gland. Important for the biosynthesis of triglycerides with medium-length fatty acid chains. May modulate lipogenesis by interacting with MID1IP1 and preventing its interaction with ACACA. May function as transcriptional coactivator. May modulate the transcription factor activity of THRB. In Rattus norvegicus (Rat), this protein is Thyroid hormone-inducible hepatic protein (Thrsp).